The primary structure comprises 88 residues: Small ribosomal subunit protein uS15 (88 aa).

Belongs to the universal ribosomal protein uS15 family. In terms of assembly, part of the 30S ribosomal subunit. Forms a bridge to the 50S subunit in the 70S ribosome, contacting the 23S rRNA.

Its function is as follows. One of the primary rRNA binding proteins, it binds directly to 16S rRNA where it helps nucleate assembly of the platform of the 30S subunit by binding and bridging several RNA helices of the 16S rRNA. Functionally, forms an intersubunit bridge (bridge B4) with the 23S rRNA of the 50S subunit in the ribosome. This Francisella tularensis subsp. novicida (strain U112) protein is Small ribosomal subunit protein uS15.